The chain runs to 525 residues: Zinc finger C2HC domain-containing protein 1C (525 aa).

Residues 23 to 34 show a composition bias toward basic and acidic residues; that stretch reads AHGLHSAKHDPY. 3 disordered regions span residues 23–48, 85–107, and 145–171; these read AHGL…MGHL, CPHS…GKGL, and VHRK…PDSS. Residues 36-48 show a composition bias toward polar residues; sequence QSDSPQRSSMGHL. Residues 90-102 show a composition bias toward low complexity; it reads GISQQGSGNNAQG. Positions 207-252 form a coiled coil; the sequence is TQIQRLEAAGESLQKEIRRKEILLREKLKKTEEGLRRIQREKKQAI. Disordered stretches follow at residues 292-316, 330-349, and 356-379; these read SRNR…LSDY, NNKI…SQPA, and LQAS…EQEL. Residues 301 to 312 are compositionally biased toward polar residues; that stretch reads CEQAQENSSPLQ. Over residues 359–373 the composition is skewed to low complexity; the sequence is SSLSGTPGSSGSSSS. C2HC/C3H-type zinc fingers lie at residues 378-407 and 487-516; these read ELGK…MQGS and DYVQ…IKNR. The Zn(2+) site is built by Cys382, Cys385, His397, Cys401, Cys491, Cys494, His506, and Cys510.

The protein belongs to the ZC2HC1 family. It depends on Zn(2+) as a cofactor.

The polypeptide is Zinc finger C2HC domain-containing protein 1C (Zc2hc1c) (Rattus norvegicus (Rat)).